The following is a 687-amino-acid chain: Polyphosphate kinase (687 aa).

Asparagine 45 lines the ATP pocket. Mg(2+)-binding residues include arginine 375 and arginine 405. Histidine 435 (phosphohistidine intermediate) is an active-site residue. The ATP site is built by tyrosine 472, arginine 568, and histidine 596.

The protein belongs to the polyphosphate kinase 1 (PPK1) family. The cofactor is Mg(2+). An intermediate of this reaction is the autophosphorylated ppk in which a phosphate is covalently linked to a histidine residue through a N-P bond.

It catalyses the reaction [phosphate](n) + ATP = [phosphate](n+1) + ADP. Functionally, catalyzes the reversible transfer of the terminal phosphate of ATP to form a long-chain polyphosphate (polyP). The protein is Polyphosphate kinase of Burkholderia multivorans (strain ATCC 17616 / 249).